The following is a 449-amino-acid chain: Aspartate aminotransferase 3, chloroplastic (449 aa).

The N-terminal 43 residues, 1 to 43 (MKTTHFSSSSSSDRRIGALLRHLNSGSDSDNLSSLYASPTSGG), are a transit peptide targeting the chloroplast. 3 residues coordinate L-aspartate: glycine 81, tryptophan 178, and asparagine 231. N6-(pyridoxal phosphate)lysine is present on lysine 295. Arginine 423 contributes to the L-aspartate binding site.

Belongs to the class-I pyridoxal-phosphate-dependent aminotransferase family. In terms of assembly, homodimer. Pyridoxal 5'-phosphate is required as a cofactor. As to expression, expressed in roots, cauline leaves, flowers, hypocotyl epidermis and root hair cells.

Its subcellular location is the plastid. It localises to the chloroplast. The enzyme catalyses L-aspartate + 2-oxoglutarate = oxaloacetate + L-glutamate. Functionally, amino acid aminotransferase important for the metabolism of amino acids and Krebs-cycle related organic acids. No activity with D-Asp or D-Ala as amino donors. In plants, it is involved in nitrogen metabolism and in aspects of carbon and energy metabolism. This is Aspartate aminotransferase 3, chloroplastic (ASP3) from Arabidopsis thaliana (Mouse-ear cress).